A 194-amino-acid chain; its full sequence is UPF0301 protein FTA_1286 (194 aa).

It belongs to the UPF0301 (AlgH) family.

The sequence is that of UPF0301 protein FTA_1286 from Francisella tularensis subsp. holarctica (strain FTNF002-00 / FTA).